Consider the following 177-residue polypeptide: Protein PrsK (177 aa).

The signal sequence occupies residues 1 to 21 (MIKSTGALLLFAALSAGQAMA).

The protein resides in the fimbrium. This is Protein PrsK (prsK) from Escherichia coli.